The following is a 407-amino-acid chain: Glycolate oxidase iron-sulfur subunit (407 aa).

4Fe-4S ferredoxin-type domains are found at residues 14–47 and 66–95; these read RALE…ELDG and LKTQ…HNLL. Positions 25, 28, 31, 35, 75, 78, 81, and 85 each coordinate [4Fe-4S] cluster.

In terms of assembly, the glycolate oxidase likely consists of three subunits, GlcD, GlcE and GlcF. It depends on [4Fe-4S] cluster as a cofactor.

It localises to the cell inner membrane. It carries out the reaction glycolate + A = glyoxylate + AH2. The enzyme catalyses (R)-lactate + A = pyruvate + AH2. Its activity is regulated as follows. In vitro the glycolate oxidase activity is inhibited by the sulfhydryl inhibitors CuSO4 and PCMB, by KCN, but not by the metal complexing agent EDTA. Functionally, component of a complex that catalyzes the oxidation of glycolate to glyoxylate. Is required for E.coli to grow on glycolate as a sole source of carbon. Is also able to oxidize D-lactate ((R)-lactate) with a similar rate. Does not link directly to O(2), and 2,6-dichloroindophenol (DCIP) and phenazine methosulfate (PMS) can act as artificial electron acceptors in vitro, but the physiological molecule that functions as a primary electron acceptor during glycolate oxidation is unknown. The sequence is that of Glycolate oxidase iron-sulfur subunit from Escherichia coli (strain K12).